Consider the following 498-residue polypeptide: Diacylglycerol O-acyltransferase 1A (498 aa).

The interval 1–67 (MAISDEPETV…ANSQPQQKQD (67 aa)) is disordered. Helical transmembrane passes span 102–122 (HAGLFNLCIVVLVAVNSRLII), 146–166 (WPLFMCCLSLVVFPFAAFIVE), 178–198 (VVVVLHIIITSASLFYPVLVI), 203–223 (SAFLSGVTLMLFACVVWLKLV), 253–273 (YPYNVSFKSLAYFLVAPTLCY), 295–315 (LIIFTGVMGFIIEQYINPIVQ), and 342–362 (VWLCMFYCFFHLWLNILAELL). The short motif at 369 to 375 (FYQDWWN) is the FYXDWWN motif element. Helical transmembrane passes span 410–430 (AVALLIAFLVSALFHELCIAV), 432–452 (CHIFKLWAFGGIMFQVPLVFI), and 465–485 (VGNMIFWFIFSILGQPMCVLL). The active site involves histidine 424.

It belongs to the membrane-bound acyltransferase family. Sterol o-acyltransferase subfamily. Highly expressed in flowers and pods. Expressed at low levels in roots, stems and leaves.

Its subcellular location is the endoplasmic reticulum membrane. The enzyme catalyses an acyl-CoA + a 1,2-diacyl-sn-glycerol = a triacyl-sn-glycerol + CoA. It functions in the pathway glycerolipid metabolism; triacylglycerol biosynthesis. Its function is as follows. Major contributor to triacylglycerol (TAG) synthesis and oil accumulation in developing seeds. Catalyzes the acylation of the sn-3 hydroxy group of sn-1,2-diacylglycerol using acyl-CoA. Has a marked preference for oleoyl-CoA (18:1) and sn-1,2-dioleoylglycerol over vernoloyl-CoA and sn-1,2-divernoloylglycerol. Can use oleoyl-CoA, linoleoyl-CoA and linolenoyl-CoA as substrates. This is Diacylglycerol O-acyltransferase 1A from Glycine max (Soybean).